The sequence spans 154 residues: Melatonin receptor type 1A (154 aa).

The Cytoplasmic portion of the chain corresponds to 1–19; that stretch reads YCYICHSLKYDRWYSNRNS. A helical membrane pass occupies residues 20 to 40; it reads LCCVFLICVLTLVAIVPNLCM. Residues 41-62 are Extracellular-facing; the sequence is GTLQYDPRIYSCTFAQSVSSAY. Residues 63-83 form a helical membrane-spanning segment; that stretch reads TIAVVVFHFLVPMVIVIFRYL. At 84–115 the chain is on the cytoplasmic side; the sequence is RIWVLVLQIRWRAKPENNPRLKPQDFRNFVTM. The helical transmembrane segment at 116–136 threads the bilayer; it reads FVVFVLFAICWAPLNFIGLAV. Over 137-149 the chain is Extracellular; sequence ASDPASMAPRIPE.

The protein belongs to the G-protein coupled receptor 1 family.

The protein localises to the cell membrane. High affinity receptor for melatonin. Likely to mediate the reproductive and circadian actions of melatonin. The activity of this receptor is mediated by pertussis toxin sensitive G proteins that inhibit adenylate cyclase activity. In Sus scrofa (Pig), this protein is Melatonin receptor type 1A (MTNR1A).